The following is a 225-amino-acid chain: Thymidylate kinase (225 aa).

15–22 is an ATP binding site; the sequence is GGEGSGKS.

Belongs to the thymidylate kinase family.

The enzyme catalyses dTMP + ATP = dTDP + ADP. Its function is as follows. Phosphorylation of dTMP to form dTDP in both de novo and salvage pathways of dTTP synthesis. In Protochlamydia amoebophila (strain UWE25), this protein is Thymidylate kinase.